Here is a 368-residue protein sequence, read N- to C-terminus: Carbamoyl phosphate synthase small chain (368 aa).

Residues 1 to 178 are CPSase; the sequence is MKAVLGLEDG…GAECAWKGSG (178 aa). Ser45, Gly230, and Gly232 together coordinate L-glutamine. The region spanning 182 to 368 is the Glutamine amidotransferase type-1 domain; it reads HAVVVDLGIK…KVVKVLGGDL (187 aa). Cys257 acts as the Nucleophile in catalysis. The L-glutamine site is built by Phe258, Gln261, Asn299, Gly301, and Tyr302. Residues His342 and Glu344 contribute to the active site.

Belongs to the CarA family. As to quaternary structure, composed of two chains; the small (or glutamine) chain promotes the hydrolysis of glutamine to ammonia, which is used by the large (or ammonia) chain to synthesize carbamoyl phosphate. Tetramer of heterodimers (alpha,beta)4.

It catalyses the reaction hydrogencarbonate + L-glutamine + 2 ATP + H2O = carbamoyl phosphate + L-glutamate + 2 ADP + phosphate + 2 H(+). The enzyme catalyses L-glutamine + H2O = L-glutamate + NH4(+). It functions in the pathway amino-acid biosynthesis; L-arginine biosynthesis; carbamoyl phosphate from bicarbonate: step 1/1. The protein operates within pyrimidine metabolism; UMP biosynthesis via de novo pathway; (S)-dihydroorotate from bicarbonate: step 1/3. Small subunit of the glutamine-dependent carbamoyl phosphate synthetase (CPSase). CPSase catalyzes the formation of carbamoyl phosphate from the ammonia moiety of glutamine, carbonate, and phosphate donated by ATP, constituting the first step of 2 biosynthetic pathways, one leading to arginine and/or urea and the other to pyrimidine nucleotides. The small subunit (glutamine amidotransferase) binds and cleaves glutamine to supply the large subunit with the substrate ammonia. In Methanosarcina acetivorans (strain ATCC 35395 / DSM 2834 / JCM 12185 / C2A), this protein is Carbamoyl phosphate synthase small chain.